Consider the following 341-residue polypeptide: Tetraacyldisaccharide 4'-kinase (341 aa).

Position 64–71 (64–71 (AVGGSGKT)) interacts with ATP.

It belongs to the LpxK family.

The catalysed reaction is a lipid A disaccharide + ATP = a lipid IVA + ADP + H(+). It participates in glycolipid biosynthesis; lipid IV(A) biosynthesis; lipid IV(A) from (3R)-3-hydroxytetradecanoyl-[acyl-carrier-protein] and UDP-N-acetyl-alpha-D-glucosamine: step 6/6. Transfers the gamma-phosphate of ATP to the 4'-position of a tetraacyldisaccharide 1-phosphate intermediate (termed DS-1-P) to form tetraacyldisaccharide 1,4'-bis-phosphate (lipid IVA). This is Tetraacyldisaccharide 4'-kinase from Azoarcus sp. (strain BH72).